A 381-amino-acid chain; its full sequence is Alkanesulfonate monooxygenase (381 aa).

Belongs to the SsuD family. In terms of assembly, homotetramer.

It catalyses the reaction an alkanesulfonate + FMNH2 + O2 = an aldehyde + FMN + sulfite + H2O + 2 H(+). Its function is as follows. Catalyzes the desulfonation of aliphatic sulfonates. The chain is Alkanesulfonate monooxygenase from Escherichia coli O9:H4 (strain HS).